The primary structure comprises 462 residues: Putative F-box protein At1g12855 (462 aa).

Basic and acidic residues predominate over residues 1–22 (MESREDSFISKEKKSTMKKEKQ). A disordered region spans residues 1 to 59 (MESREDSFISKEKKSTMKKEKQAIASQRNRRRVIKNRGNGKRLIASLSQRKRRRIPRGR). Basic residues predominate over residues 28 to 40 (RNRRRVIKNRGNG). An F-box domain is found at 65-110 (VFAPSSLPNDVVEEIFLRLPVKAIIQLKSLSKQWRSTIESRSFEER).

The chain is Putative F-box protein At1g12855 from Arabidopsis thaliana (Mouse-ear cress).